The following is a 475-amino-acid chain: Ankyrin repeat, SAM and basic leucine zipper domain-containing protein 1 (475 aa).

The disordered stretch occupies residues M1 to W25. 3 positions are modified to phosphoserine: S17, S18, and S20. ANK repeat units lie at residues E45–S74, Y78–F107, D110–V144, R148–T177, N181–L210, and D214–G243. In terms of domain architecture, SAM spans S272–Q334.

In terms of assembly, interacts with DDX4, PIWIL1, RANBP9 and TDRD1. As to expression, expressed exclusively in the testis and ovary and at higher levels in the adult testis compared with the adult ovary.

It is found in the cytoplasm. Plays a central role during spermatogenesis by repressing transposable elements and preventing their mobilization, which is essential for the germline integrity. Acts via the piRNA metabolic process, which mediates the repression of transposable elements during meiosis by forming complexes composed of piRNAs and Piwi proteins and governs the methylation and subsequent repression of transposons. Its association with pi-bodies suggests a participation in the primary piRNAs metabolic process. Required prior to the pachytene stage to facilitate the production of multiple types of piRNAs, including those associated with repeats involved in the regulation of retrotransposons. May act by mediating protein-protein interactions during germ cell maturation. The protein is Ankyrin repeat, SAM and basic leucine zipper domain-containing protein 1 of Homo sapiens (Human).